Reading from the N-terminus, the 305-residue chain is Homoserine O-acetyltransferase (305 aa).

The Acyl-thioester intermediate role is filled by Cys-142. Substrate is bound by residues Lys-163 and Ser-192. Residue His-235 is the Proton acceptor of the active site. Glu-237 is an active-site residue. Arg-249 is a binding site for substrate.

This sequence belongs to the MetA family.

Its subcellular location is the cytoplasm. The catalysed reaction is L-homoserine + acetyl-CoA = O-acetyl-L-homoserine + CoA. The protein operates within amino-acid biosynthesis; L-methionine biosynthesis via de novo pathway; O-acetyl-L-homoserine from L-homoserine: step 1/1. Its function is as follows. Transfers an acetyl group from acetyl-CoA to L-homoserine, forming acetyl-L-homoserine. This chain is Homoserine O-acetyltransferase, found in Phocaeicola vulgatus (strain ATCC 8482 / DSM 1447 / JCM 5826 / CCUG 4940 / NBRC 14291 / NCTC 11154) (Bacteroides vulgatus).